Reading from the N-terminus, the 465-residue chain is Argininosuccinate lyase (465 aa).

It belongs to the lyase 1 family. Argininosuccinate lyase subfamily.

It localises to the cytoplasm. The enzyme catalyses 2-(N(omega)-L-arginino)succinate = fumarate + L-arginine. The protein operates within amino-acid biosynthesis; L-arginine biosynthesis; L-arginine from L-ornithine and carbamoyl phosphate: step 3/3. This is Argininosuccinate lyase from Variovorax paradoxus (strain S110).